The sequence spans 285 residues: Shikimate dehydrogenase (NADP(+)) (285 aa).

Shikimate is bound by residues 22–24 and T69; that span reads SMS. The active-site Proton acceptor is K73. An NADP(+)-binding site is contributed by D85. Residues N94 and D110 each contribute to the shikimate site. NADP(+) contacts are provided by residues 136–140, 160–165, and M225; these read GAGGA and NRTVAR. Y227 is a shikimate binding site. G248 contacts NADP(+).

This sequence belongs to the shikimate dehydrogenase family. Homodimer.

The catalysed reaction is shikimate + NADP(+) = 3-dehydroshikimate + NADPH + H(+). It functions in the pathway metabolic intermediate biosynthesis; chorismate biosynthesis; chorismate from D-erythrose 4-phosphate and phosphoenolpyruvate: step 4/7. Its function is as follows. Involved in the biosynthesis of the chorismate, which leads to the biosynthesis of aromatic amino acids. Catalyzes the reversible NADPH linked reduction of 3-dehydroshikimate (DHSA) to yield shikimate (SA). This Caulobacter vibrioides (strain ATCC 19089 / CIP 103742 / CB 15) (Caulobacter crescentus) protein is Shikimate dehydrogenase (NADP(+)).